The following is an 82-amino-acid chain: ATP synthase subunit 9, mitochondrial (82 aa).

2 helical membrane-spanning segments follow: residues 8–28 (IGAGAATIASAGAAIGIGNVF) and 45–67 (SFGYAILGFALTEAIASFAPMMA).

This sequence belongs to the ATPase C chain family. F-type ATPases have 2 components, CF(1) - the catalytic core - and CF(0) - the membrane proton channel. CF(1) has five subunits: alpha(3), beta(3), gamma(1), delta(1), epsilon(1). CF(0) has three main subunits: a, b and c.

It localises to the mitochondrion membrane. Functionally, this protein is one of the chains of the nonenzymatic membrane component (F0) of mitochondrial ATPase. In Malus domestica (Apple), this protein is ATP synthase subunit 9, mitochondrial (ATP9).